We begin with the raw amino-acid sequence, 256 residues long: uncharacterized protein (256 aa).

A signal peptide spans 1-24 (MIKRVNKLVLGISFLFLIISIFAG). Residue C25 is the site of N-palmitoyl cysteine attachment. Residue C25 is the site of S-diacylglycerol cysteine attachment.

Belongs to the staphylococcal tandem lipoprotein family.

It localises to the cell membrane. This is an uncharacterized protein from Staphylococcus aureus (strain Mu50 / ATCC 700699).